The following is a 272-amino-acid chain: Methyl-CpG-binding domain-containing protein 2 (272 aa).

Residues 1–15 (MSMSQSRAVQRSSSP) show a composition bias toward polar residues. The interval 1–24 (MSMSQSRAVQRSSSPNEDRGENQL) is disordered. A CW-type zinc finger spans residues 53–112 (CPSIGAFTVQCASCFKWRLMPSMQKYEEIREQLLENPFFCDTAREWKPDISCDVPADIYQ). An MBD-associated domain (MAD) motif is present at residues 62–104 (QCASCFKWRLMPSMQKYEEIREQLLENPFFCDTAREWKPDISC). Residues Cys-63, Cys-66, Cys-92, and Cys-104 each contribute to the Zn(2+) site. One can recognise an MBD domain in the interval 118–192 (WAIDKPNISR…SQFSFQIPKP (75 aa)). A compositionally biased stretch (polar residues) spans 236 to 250 (LGTPTESGLNNSHYQ). A disordered region spans residues 236-272 (LGTPTESGLNNSHYQPSKKKKTSTLSIFGSNDELADR).

In terms of assembly, interacts (via MBD domain) with DDM1. As to expression, expressed in buds, flowers, stems, siliques and mature seeds.

It localises to the nucleus. Functionally, probable transcriptional regulator. The protein is Methyl-CpG-binding domain-containing protein 2 (MBD2) of Arabidopsis thaliana (Mouse-ear cress).